Consider the following 605-residue polypeptide: Elongation factor 4 (605 aa).

The tr-type G domain maps to 9–192 (SRTRNFCIIA…AIIARIPSPK (184 aa)). Residues 21–26 (DHGKST) and 139–142 (NKID) each bind GTP.

The protein belongs to the TRAFAC class translation factor GTPase superfamily. Classic translation factor GTPase family. LepA subfamily.

Its subcellular location is the cell inner membrane. The catalysed reaction is GTP + H2O = GDP + phosphate + H(+). Its function is as follows. Required for accurate and efficient protein synthesis under certain stress conditions. May act as a fidelity factor of the translation reaction, by catalyzing a one-codon backward translocation of tRNAs on improperly translocated ribosomes. Back-translocation proceeds from a post-translocation (POST) complex to a pre-translocation (PRE) complex, thus giving elongation factor G a second chance to translocate the tRNAs correctly. Binds to ribosomes in a GTP-dependent manner. The chain is Elongation factor 4 from Chlorobium limicola (strain DSM 245 / NBRC 103803 / 6330).